A 209-amino-acid chain; its full sequence is MTLASQIATQLLDIKAVYLKPEDPFTWASGIKSPIYTDNRVTLSYPKTRDLIENGFVETIRAHFPEVEVIAGTATAGIPHGAIIADKMTLPFAYIRSKPKDHGAGNQIEGRVLKGQKMVIIEDLISTGGSVLDAAAAASREGADVLGVVAIFTYELPKASQNFKEAGIKLITLSNYTELIAVAKLQGYITNDGLHLLKKFKEDQVNWQQ.

5-phospho-alpha-D-ribose 1-diphosphate is bound by residues Arg-96, Lys-100, His-102, and 122–130 (EDLISTGGS). Ser-126 lines the orotate pocket.

The protein belongs to the purine/pyrimidine phosphoribosyltransferase family. PyrE subfamily. Homodimer. Requires Mg(2+) as cofactor.

It carries out the reaction orotidine 5'-phosphate + diphosphate = orotate + 5-phospho-alpha-D-ribose 1-diphosphate. It functions in the pathway pyrimidine metabolism; UMP biosynthesis via de novo pathway; UMP from orotate: step 1/2. Functionally, catalyzes the transfer of a ribosyl phosphate group from 5-phosphoribose 1-diphosphate to orotate, leading to the formation of orotidine monophosphate (OMP). In Streptococcus pyogenes serotype M3 (strain ATCC BAA-595 / MGAS315), this protein is Orotate phosphoribosyltransferase.